The sequence spans 174 residues: Peptide methionine sulfoxide reductase MsrA (174 aa).

Residue cysteine 10 is part of the active site.

It belongs to the MsrA Met sulfoxide reductase family.

The enzyme catalyses L-methionyl-[protein] + [thioredoxin]-disulfide + H2O = L-methionyl-(S)-S-oxide-[protein] + [thioredoxin]-dithiol. The catalysed reaction is [thioredoxin]-disulfide + L-methionine + H2O = L-methionine (S)-S-oxide + [thioredoxin]-dithiol. Has an important function as a repair enzyme for proteins that have been inactivated by oxidation. Catalyzes the reversible oxidation-reduction of methionine sulfoxide in proteins to methionine. The protein is Peptide methionine sulfoxide reductase MsrA of Arthrobacter sp. (strain FB24).